A 341-amino-acid chain; its full sequence is Aspartate carbamoyltransferase catalytic subunit (341 aa).

Carbamoyl phosphate-binding residues include Arg74 and Thr75. Lys102 contributes to the L-aspartate binding site. Carbamoyl phosphate-binding residues include Arg124, His152, and Gln155. 2 residues coordinate L-aspartate: Arg190 and Arg244. Carbamoyl phosphate contacts are provided by Gly285 and Pro286.

Belongs to the aspartate/ornithine carbamoyltransferase superfamily. ATCase family. As to quaternary structure, heterododecamer (2C3:3R2) of six catalytic PyrB chains organized as two trimers (C3), and six regulatory PyrI chains organized as three dimers (R2).

The catalysed reaction is carbamoyl phosphate + L-aspartate = N-carbamoyl-L-aspartate + phosphate + H(+). The protein operates within pyrimidine metabolism; UMP biosynthesis via de novo pathway; (S)-dihydroorotate from bicarbonate: step 2/3. Its function is as follows. Catalyzes the condensation of carbamoyl phosphate and aspartate to form carbamoyl aspartate and inorganic phosphate, the committed step in the de novo pyrimidine nucleotide biosynthesis pathway. The chain is Aspartate carbamoyltransferase catalytic subunit from Novosphingobium aromaticivorans (strain ATCC 700278 / DSM 12444 / CCUG 56034 / CIP 105152 / NBRC 16084 / F199).